The sequence spans 131 residues: ATP synthase epsilon chain, chloroplastic (131 aa).

Belongs to the ATPase epsilon chain family. In terms of assembly, F-type ATPases have 2 components, CF(1) - the catalytic core - and CF(0) - the membrane proton channel. CF(1) has five subunits: alpha(3), beta(3), gamma(1), delta(1), epsilon(1). CF(0) has three main subunits: a, b and c.

The protein localises to the plastid. It is found in the chloroplast thylakoid membrane. Produces ATP from ADP in the presence of a proton gradient across the membrane. This chain is ATP synthase epsilon chain, chloroplastic, found in Cyanidioschyzon merolae (strain NIES-3377 / 10D) (Unicellular red alga).